The following is a 580-amino-acid chain: Guanine nucleotide-binding protein alpha-4 subunit (580 aa).

Over residues 1–10 (MSPSVSSPQL) the composition is skewed to polar residues. The tract at residues 1 to 28 (MSPSVSSPQLRHTKSNRAISRIDRTDPL) is disordered. Residues 93-579 (RVYKMVLLGQ…RENLKLTGLV (487 aa)) form the G-alpha domain. The segment at 96–109 (KMVLLGQAGAGKTT) is G1 motif. 101–108 (GQAGAGKT) contacts GTP. 2 disordered regions span residues 160–196 (KSSE…PNDA) and 302–325 (GRAA…KDNS). The span at 167-183 (LESSTSASTSTSASASS) shows a compositional bias: low complexity. The segment at 387–395 (DILHSRVRT) is G2 motif. GTP contacts are provided by residues 389 to 395 (LHSRVRT), 415 to 419 (DVGGS), 484 to 487 (NKID), and Ala-551. Mg(2+) is bound at residue Thr-395. The G3 motif stretch occupies residues 411 to 420 (YRIYDVGGSR). The interval 480–487 (ILFLNKID) is G4 motif. The interval 549 to 554 (TVATST) is G5 motif.

The protein belongs to the G-alpha family. In terms of assembly, g proteins are composed of 3 units; alpha, beta and gamma. The alpha chain contains the guanine nucleotide binding site.

Its function is as follows. Guanine nucleotide-binding proteins (G proteins) are involved as modulators or transducers in various transmembrane signaling systems. The polypeptide is Guanine nucleotide-binding protein alpha-4 subunit (GPA4) (Mycosarcoma maydis (Corn smut fungus)).